The sequence spans 226 residues: Uridylate kinase (226 aa).

ATP is bound at residue 6-10 (KISGK). Position 43 (Gly-43) interacts with UMP. ATP-binding residues include Gly-44 and Arg-48. UMP contacts are provided by residues Asp-65 and 113–119 (FQPGQST). Residues Thr-139, Asn-140, Tyr-145, and Asp-148 each contribute to the ATP site.

The protein belongs to the UMP kinase family. In terms of assembly, homohexamer.

The protein resides in the cytoplasm. The catalysed reaction is UMP + ATP = UDP + ADP. Its pathway is pyrimidine metabolism; CTP biosynthesis via de novo pathway; UDP from UMP (UMPK route): step 1/1. Inhibited by UTP. Its function is as follows. Catalyzes the reversible phosphorylation of UMP to UDP. The chain is Uridylate kinase from Saccharolobus islandicus (strain Y.N.15.51 / Yellowstone #2) (Sulfolobus islandicus).